The primary structure comprises 98 residues: Co-chaperonin GroES 1 (98 aa).

Belongs to the GroES chaperonin family. As to quaternary structure, heptamer of 7 subunits arranged in a ring. Interacts with the chaperonin GroEL.

The protein resides in the cytoplasm. In terms of biological role, together with the chaperonin GroEL, plays an essential role in assisting protein folding. The GroEL-GroES system forms a nano-cage that allows encapsulation of the non-native substrate proteins and provides a physical environment optimized to promote and accelerate protein folding. GroES binds to the apical surface of the GroEL ring, thereby capping the opening of the GroEL channel. The sequence is that of Co-chaperonin GroES 1 from Rhizobium meliloti (strain 1021) (Ensifer meliloti).